The following is a 170-amino-acid chain: Small ribosomal subunit protein mS41 (170 aa).

The transit peptide at Met1–Ser20 directs the protein to the mitochondrion.

It belongs to the mitochondrion-specific ribosomal protein mS41 family. As to quaternary structure, component of the mitochondrial small ribosomal subunit (mt-SSU).

It localises to the mitochondrion. Functionally, component of the mitochondrial ribosome (mitoribosome), a dedicated translation machinery responsible for the synthesis of mitochondrial genome-encoded proteins, including at least some of the essential transmembrane subunits of the mitochondrial respiratory chain. The mitoribosomes are attached to the mitochondrial inner membrane and translation products are cotranslationally integrated into the membrane. mS41 is involved in telomere length regulation. The polypeptide is Small ribosomal subunit protein mS41 (FYV4) (Candida albicans (strain SC5314 / ATCC MYA-2876) (Yeast)).